Reading from the N-terminus, the 455-residue chain is Bifunctional protein GlmU (455 aa).

The pyrophosphorylase stretch occupies residues 1–226 (MGLSVVILAA…EFEILGVNDR (226 aa)). UDP-N-acetyl-alpha-D-glucosamine contacts are provided by residues 8-11 (LAAG), Lys22, Gln73, 78-79 (GT), 99-101 (YGD), Gly136, Glu151, Asn166, and Asn224. A Mg(2+)-binding site is contributed by Asp101. A Mg(2+)-binding site is contributed by Asn224. The linker stretch occupies residues 227–247 (TQLASLERVWQRNVAEKIMAK). The segment at 248–455 (GVSIADPNRF…WQRSVKKTDK (208 aa)) is N-acetyltransferase. UDP-N-acetyl-alpha-D-glucosamine is bound by residues Arg330 and Lys348. His360 acts as the Proton acceptor in catalysis. 2 residues coordinate UDP-N-acetyl-alpha-D-glucosamine: Tyr363 and Asn374. Acetyl-CoA is bound by residues Ala377, 383-384 (NY), Ser402, Ala420, and Arg437.

In the N-terminal section; belongs to the N-acetylglucosamine-1-phosphate uridyltransferase family. This sequence in the C-terminal section; belongs to the transferase hexapeptide repeat family. In terms of assembly, homotrimer. Mg(2+) is required as a cofactor.

It localises to the cytoplasm. It carries out the reaction alpha-D-glucosamine 1-phosphate + acetyl-CoA = N-acetyl-alpha-D-glucosamine 1-phosphate + CoA + H(+). The enzyme catalyses N-acetyl-alpha-D-glucosamine 1-phosphate + UTP + H(+) = UDP-N-acetyl-alpha-D-glucosamine + diphosphate. It functions in the pathway nucleotide-sugar biosynthesis; UDP-N-acetyl-alpha-D-glucosamine biosynthesis; N-acetyl-alpha-D-glucosamine 1-phosphate from alpha-D-glucosamine 6-phosphate (route II): step 2/2. Its pathway is nucleotide-sugar biosynthesis; UDP-N-acetyl-alpha-D-glucosamine biosynthesis; UDP-N-acetyl-alpha-D-glucosamine from N-acetyl-alpha-D-glucosamine 1-phosphate: step 1/1. It participates in bacterial outer membrane biogenesis; LPS lipid A biosynthesis. In terms of biological role, catalyzes the last two sequential reactions in the de novo biosynthetic pathway for UDP-N-acetylglucosamine (UDP-GlcNAc). The C-terminal domain catalyzes the transfer of acetyl group from acetyl coenzyme A to glucosamine-1-phosphate (GlcN-1-P) to produce N-acetylglucosamine-1-phosphate (GlcNAc-1-P), which is converted into UDP-GlcNAc by the transfer of uridine 5-monophosphate (from uridine 5-triphosphate), a reaction catalyzed by the N-terminal domain. The chain is Bifunctional protein GlmU from Francisella tularensis subsp. tularensis (strain FSC 198).